The primary structure comprises 171 residues: UPF0398 protein stu0232 (171 aa).

This sequence belongs to the UPF0398 family.

The protein is UPF0398 protein stu0232 of Streptococcus thermophilus (strain ATCC BAA-250 / LMG 18311).